A 213-amino-acid polypeptide reads, in one-letter code: Kynurenine formamidase (213 aa).

Tryptophan 15 lines the substrate pocket. The Zn(2+) site is built by histidine 45, histidine 49, and aspartate 51. The Proton donor/acceptor role is filled by histidine 55. Residues histidine 157 and glutamate 169 each contribute to the Zn(2+) site.

This sequence belongs to the Cyclase 1 superfamily. KynB family. In terms of assembly, homodimer. It depends on Zn(2+) as a cofactor.

It carries out the reaction N-formyl-L-kynurenine + H2O = L-kynurenine + formate + H(+). Its pathway is amino-acid degradation; L-tryptophan degradation via kynurenine pathway; L-kynurenine from L-tryptophan: step 2/2. In terms of biological role, catalyzes the hydrolysis of N-formyl-L-kynurenine to L-kynurenine, the second step in the kynurenine pathway of tryptophan degradation. This Deinococcus geothermalis (strain DSM 11300 / CIP 105573 / AG-3a) protein is Kynurenine formamidase.